The primary structure comprises 315 residues: Cobalamin biosynthesis protein CobD (315 aa).

The next 5 membrane-spanning stretches (helical) occupy residues 48–70 (IAGILTSCLVYLISFIIPFLSVQ), 75–94 (LHWILGELLSIMIIYTTIAI), 148–170 (LVDGITTPLFYAVFGGPAWAMLY), 208–230 (ITSYILVLSSLFLGYNFKNSLYI), and 292–314 (LILLSSILTFIFYILIYSGAAYF).

This sequence belongs to the CobD/CbiB family.

The protein resides in the cell membrane. It functions in the pathway cofactor biosynthesis; adenosylcobalamin biosynthesis. Converts cobyric acid to cobinamide by the addition of aminopropanol on the F carboxylic group. The protein is Cobalamin biosynthesis protein CobD of Leptospira interrogans serogroup Icterohaemorrhagiae serovar copenhageni (strain Fiocruz L1-130).